We begin with the raw amino-acid sequence, 172 residues long: Dehydratase cfoI (172 aa).

Residues histidine 86 and histidine 111 contribute to the active site.

The protein belongs to the scytalone dehydratase family. As to quaternary structure, homotrimer. Each subunit contains an active site, located in the central part of the hydrophobic core of the monomer, which functions independently.

Its pathway is secondary metabolite biosynthesis; flavonoid biosynthesis. Functionally, cytochrome P450 monooxygenase; part of the gene cluster that mediates the biosynthesis of chlorflavonin, a fungal flavonoid with acetolactate synthase inhibitory activity. Within the pathway, cfoI is responsible for the hydroxylation of the flavonoid skeleton at position C3 with cfoF. The pathway begins with the PKS-NRPS hybrid synthetase cfoA that uses benzoic acid or p-hydroxybenzoic acid as a starter unit with four rounds of chain elongation using malonyl-CoA to form the chalcone skeleton. Then, a new type of chalcone isomerase, cfoK, catalyzes the conversion of the chalcone into a flavanone by a histidine-mediated oxa-Michael addition mechanism. The desaturation of flavanone to flavone is catalyzed by a new type of flavone synthase, the flavin mononucleotide (FMN)-dependent oxidoreductase cfoJ. Monooxygenases cfoF, cfoG, and P450 cfoH are responsible for the hydroxylation of the flavonoid skeleton at sites C3, C8, and C2', respectively. Like cfoF, the dehydratase cfoI plays also a role in the hydroxylation of position C3. Methyltransferases cfoB, cfoC, and cfoD then catalyze the methylation of C7-OH, C8-OH, and C3-OH, respectively. Finally, the monooxygenase cfoE is responsible for the chlorination of flavonoid at position C3'. The sequence is that of Dehydratase cfoI from Aspergillus candidus.